Consider the following 354-residue polypeptide: S-adenosylmethionine:tRNA ribosyltransferase-isomerase (354 aa).

It belongs to the QueA family. In terms of assembly, monomer.

The protein resides in the cytoplasm. The catalysed reaction is 7-aminomethyl-7-carbaguanosine(34) in tRNA + S-adenosyl-L-methionine = epoxyqueuosine(34) in tRNA + adenine + L-methionine + 2 H(+). It functions in the pathway tRNA modification; tRNA-queuosine biosynthesis. Transfers and isomerizes the ribose moiety from AdoMet to the 7-aminomethyl group of 7-deazaguanine (preQ1-tRNA) to give epoxyqueuosine (oQ-tRNA). This Salmonella heidelberg (strain SL476) protein is S-adenosylmethionine:tRNA ribosyltransferase-isomerase.